The chain runs to 320 residues: Na(+)-translocating NADH-quinone reductase subunit C (320 aa).

A helical transmembrane segment spans residues 16 to 36 (WYIVSFILGLSLFAGVLLSTI). Thr-285 carries the FMN phosphoryl threonine modification.

The protein belongs to the NqrC family. In terms of assembly, composed of six subunits; NqrA, NqrB, NqrC, NqrD, NqrE and NqrF. FMN is required as a cofactor.

It is found in the cell inner membrane. The catalysed reaction is a ubiquinone + n Na(+)(in) + NADH + H(+) = a ubiquinol + n Na(+)(out) + NAD(+). Functionally, NQR complex catalyzes the reduction of ubiquinone-1 to ubiquinol by two successive reactions, coupled with the transport of Na(+) ions from the cytoplasm to the periplasm. NqrA to NqrE are probably involved in the second step, the conversion of ubisemiquinone to ubiquinol. The protein is Na(+)-translocating NADH-quinone reductase subunit C of Chlamydia pneumoniae (Chlamydophila pneumoniae).